Consider the following 2890-residue polypeptide: Bifunctional DNA-directed RNA polymerase subunit beta-beta' (2890 aa).

A DNA-directed RNA polymerase subunit beta region spans residues 1-1377 (MSKKIPLKNR…DINIFGDDVD (1377 aa)). The DNA-directed RNA polymerase subunit beta' stretch occupies residues 1384–2890 (PIMIKEDDRP…LRALEDNSKF (1507 aa)). Zn(2+) contacts are provided by C1449, C1451, C1465, and C1468. Residues D1849, D1851, and D1853 each contribute to the Mg(2+) site. Zn(2+) contacts are provided by C2179, C2253, C2260, and C2263.

In the N-terminal section; belongs to the RNA polymerase beta chain family. The protein in the C-terminal section; belongs to the RNA polymerase beta' chain family. As to quaternary structure, the RNAP catalytic core consists of 2 alpha, 1 beta/beta' and 1 omega subunit. When a sigma factor is associated with the core the holoenzyme is formed, which can initiate transcription. Mg(2+) serves as cofactor. Requires Zn(2+) as cofactor.

The catalysed reaction is RNA(n) + a ribonucleoside 5'-triphosphate = RNA(n+1) + diphosphate. DNA-dependent RNA polymerase catalyzes the transcription of DNA into RNA using the four ribonucleoside triphosphates as substrates. The protein is Bifunctional DNA-directed RNA polymerase subunit beta-beta' (rpoBC) of Helicobacter pylori (strain J99 / ATCC 700824) (Campylobacter pylori J99).